The primary structure comprises 342 residues: Serine/threonine-protein kinase-transforming protein mos (342 aa).

A Protein kinase domain is found at 63-338 (VCLMHRLGSG…LLQRDLKAFR (276 aa)). Residues 69–77 (LGSGGFGSV) and K90 contribute to the ATP site. D198 functions as the Proton acceptor in the catalytic mechanism.

This sequence belongs to the protein kinase superfamily. Ser/Thr protein kinase family.

The enzyme catalyses L-seryl-[protein] + ATP = O-phospho-L-seryl-[protein] + ADP + H(+). It carries out the reaction L-threonyl-[protein] + ATP = O-phospho-L-threonyl-[protein] + ADP + H(+). The chain is Serine/threonine-protein kinase-transforming protein mos (V-MOS) from Myeloproliferative sarcoma virus (isolate ts159).